The following is a 283-amino-acid chain: MSFTSRLKKELFIKAQNLVPQHQLSRVVGKVAASENPILKAAVIHAFKTKYGIDLSIAEQGNALKYKSFNDFFTRALKDGVRLVDENPDSIVSPADGAISQIGKITAGEVFQAKGQSFSVEKLIGDPQLAQPFQEGEFATVYLSPRDYHRVHMPFSGTLTETLYVPGELFSVNQVTAENVPGLFARNERMVCLFDTELGRMAVVLVGAMIVAGIETVATGKVKPSGRIELQHHELKLEKGAELGRFYLGSTAIILFEKDKIEWEKRYKAESVVVMGERMGHTL.

Active-site charge relay system; for autoendoproteolytic cleavage activity residues include D96, H152, and S250. The active-site Schiff-base intermediate with substrate; via pyruvic acid; for decarboxylase activity is the S250. Pyruvic acid (Ser); by autocatalysis is present on S250.

Belongs to the phosphatidylserine decarboxylase family. PSD-B subfamily. Prokaryotic type I sub-subfamily. In terms of assembly, heterodimer of a large membrane-associated beta subunit and a small pyruvoyl-containing alpha subunit. The cofactor is pyruvate. Is synthesized initially as an inactive proenzyme. Formation of the active enzyme involves a self-maturation process in which the active site pyruvoyl group is generated from an internal serine residue via an autocatalytic post-translational modification. Two non-identical subunits are generated from the proenzyme in this reaction, and the pyruvate is formed at the N-terminus of the alpha chain, which is derived from the carboxyl end of the proenzyme. The autoendoproteolytic cleavage occurs by a canonical serine protease mechanism, in which the side chain hydroxyl group of the serine supplies its oxygen atom to form the C-terminus of the beta chain, while the remainder of the serine residue undergoes an oxidative deamination to produce ammonia and the pyruvoyl prosthetic group on the alpha chain. During this reaction, the Ser that is part of the protease active site of the proenzyme becomes the pyruvoyl prosthetic group, which constitutes an essential element of the active site of the mature decarboxylase.

The protein resides in the cell membrane. The enzyme catalyses a 1,2-diacyl-sn-glycero-3-phospho-L-serine + H(+) = a 1,2-diacyl-sn-glycero-3-phosphoethanolamine + CO2. It functions in the pathway phospholipid metabolism; phosphatidylethanolamine biosynthesis; phosphatidylethanolamine from CDP-diacylglycerol: step 2/2. In terms of biological role, catalyzes the formation of phosphatidylethanolamine (PtdEtn) from phosphatidylserine (PtdSer). In Acinetobacter baumannii (strain ATCC 17978 / DSM 105126 / CIP 53.77 / LMG 1025 / NCDC KC755 / 5377), this protein is Phosphatidylserine decarboxylase proenzyme.